We begin with the raw amino-acid sequence, 459 residues long: MWQLASLLLLLIIWAVSSTPVPPDSVFSSSQRAHQMLRSKRANSFLEELRPSSLERECKEETCDFEEAREIFQNTENTMAFWSKYHDGDQCAVSPPEHLCDSPCCGRGTCIDGLGGFRCDCAQGWEGRFCLHEVRFSNCSTENGGCAHYCLEEEGGRRCACAPGYRLGDDHLQCEPKVRSPCGRLGNRMEKKRKNLKRDTDQVDKKEDQIDPRLVNGKQSPWGESPWQVILLDSKKKLACGAVLIHVSWVLTAAHCLDDYKKLTVRLGEYDLRRREKWEVDLDIKEFLVHPNYTRSTSDNDIALLRLAEPATFSQTIVPICLPDSGLSERELTRVGQETVVTGWGYRSEAKTNRSFILNFIKVPVAPHNECVQAMHNKISENMLCAGILGDSRDACEGDSGGPMVASFRGTWFLVGLVSWGEGCGRLHNYGVYTKVSRYLDWIHGHIRMEEAFHKNQVP.

The signal sequence occupies residues Met1–Ser18. Positions Thr19 to Arg41 are excised as a propeptide. A Gla domain is found at Ala42 to Asp87. Glu47, Glu48, Glu55, Glu57, Glu60, Glu61, Glu66, Glu67, Glu70, and Glu76 each carry 4-carboxyglutamate. Cysteines 58 and 63 form a disulfide. Intrachain disulfides connect Cys91–Cys110, Cys100–Cys105, Cys104–Cys119, and Cys121–Cys130. EGF-like domains lie at Pro96 to Leu131 and Arg135 to Glu175. Asp112 is modified ((3R)-3-hydroxyaspartate). Asn138 is a glycosylation site (N-linked (GlcNAc...) asparagine). Disulfide bonds link Cys139-Cys150, Cys146-Cys159, Cys161-Cys174, Cys182-Cys321, and Cys240-Cys256. The Peptidase S1 domain occupies Leu214–Arg448. His255 (charge relay system) is an active-site residue. An N-linked (GlcNAc...) asparagine glycan is attached at Asn292. Catalysis depends on Asp301, which acts as the Charge relay system. An N-linked (GlcNAc...) asparagine glycan is attached at Asn353. 2 disulfide bridges follow: Cys371-Cys385 and Cys396-Cys424. Ser400 acts as the Charge relay system in catalysis.

The protein belongs to the peptidase S1 family. In terms of assembly, synthesized as a single chain precursor, which is cleaved into a light chain and a heavy chain held together by a disulfide bond. The enzyme is then activated by thrombin, which cleaves a tetradecapeptide from the amino end of the heavy chain; this reaction, which occurs at the surface of endothelial cells, is strongly promoted by thrombomodulin. The vitamin K-dependent, enzymatic carboxylation of some Glu residues allows the modified protein to bind calcium. In terms of processing, the iron and 2-oxoglutarate dependent 3-hydroxylation of aspartate and asparagine is (R) stereospecific within EGF domains. In terms of tissue distribution, plasma; synthesized in the liver.

The protein resides in the secreted. It localises to the golgi apparatus. The protein localises to the endoplasmic reticulum. It catalyses the reaction Degradation of blood coagulation factors Va and VIIIa.. Protein C is a vitamin K-dependent serine protease that regulates blood coagulation by inactivating factors Va and VIIIa in the presence of calcium ions and phospholipids. Exerts a protective effect on the endothelial cell barrier function. This is Vitamin K-dependent protein C (PROC) from Sus scrofa (Pig).